The sequence spans 89 residues: Small ribosomal subunit protein uS14 (89 aa).

Belongs to the universal ribosomal protein uS14 family. In terms of assembly, part of the 30S ribosomal subunit. Contacts proteins S3 and S10.

Its function is as follows. Binds 16S rRNA, required for the assembly of 30S particles and may also be responsible for determining the conformation of the 16S rRNA at the A site. This Oenococcus oeni (strain ATCC BAA-331 / PSU-1) protein is Small ribosomal subunit protein uS14.